Consider the following 448-residue polypeptide: Probable D-serine dehydratase (448 aa).

An N6-(pyridoxal phosphate)lysine modification is found at Lys111.

The protein belongs to the serine/threonine dehydratase family. DsdA subfamily. The cofactor is pyridoxal 5'-phosphate.

The enzyme catalyses D-serine = pyruvate + NH4(+). This chain is Probable D-serine dehydratase, found in Rhizobium etli (strain CIAT 652).